The chain runs to 302 residues: Enoyl-CoA delta isomerase 1, mitochondrial (302 aa).

Residues 1-41 (MALVASVRVPARVLLRAGARLPGAALGRTERAAGGGDGARR) constitute a mitochondrion transit peptide. Position 61 is an N6-acetyllysine; alternate (lysine 61). Residue lysine 61 is modified to N6-succinyllysine; alternate. The residue at position 84 (lysine 84) is an N6-succinyllysine. Lysine 89 bears the N6-acetyllysine mark. Residues 106–110 (AGLDL), glycine 153, and asparagine 177 contribute to the substrate site. Lysine 283 carries the post-translational modification N6-acetyllysine; alternate. At lysine 283 the chain carries N6-succinyllysine; alternate. The residue at position 288 (lysine 288) is an N6-succinyllysine.

The protein belongs to the enoyl-CoA hydratase/isomerase family. As to quaternary structure, homotrimer. In terms of tissue distribution, expressed in liver (at protein level).

It is found in the mitochondrion matrix. It carries out the reaction a (3Z)-enoyl-CoA = a 4-saturated (2E)-enoyl-CoA. The catalysed reaction is a (3E)-enoyl-CoA = a 4-saturated (2E)-enoyl-CoA. It catalyses the reaction (3Z)-octenoyl-CoA = (2E)-octenoyl-CoA. The enzyme catalyses (2E)-tetradecenoyl-CoA = (3Z)-tetradecenoyl-CoA. It carries out the reaction (3Z)-dodecenoyl-CoA = (2E)-dodecenoyl-CoA. The catalysed reaction is (3Z)-hexenoyl-CoA = (2E)-hexenoyl-CoA. It catalyses the reaction (3Z)-decenoyl-CoA = (2E)-decenoyl-CoA. It functions in the pathway lipid metabolism; fatty acid beta-oxidation. Its function is as follows. Key enzyme of fatty acid beta-oxidation. Able to isomerize both 3-cis (3Z) and 3-trans (3E) double bonds into the 2-trans (2E) form in a range of enoyl-CoA species, with a preference for (3Z)-enoyl-CoAs over (3E)-enoyl-CoAs. The catalytic efficiency of this enzyme is not affected by the fatty acyl chain length. The sequence is that of Enoyl-CoA delta isomerase 1, mitochondrial (ECI1) from Homo sapiens (Human).